The chain runs to 529 residues: Peptide chain release factor 3 (529 aa).

One can recognise a tr-type G domain in the interval 11-280 (NKRRTFAIIS…GLTQWAPAPQ (270 aa)). Residues 20–27 (SHPDAGKT), 88–92 (DTPGH), and 142–145 (NKLD) each bind GTP.

The protein belongs to the TRAFAC class translation factor GTPase superfamily. Classic translation factor GTPase family. PrfC subfamily.

The protein localises to the cytoplasm. In terms of biological role, increases the formation of ribosomal termination complexes and stimulates activities of RF-1 and RF-2. It binds guanine nucleotides and has strong preference for UGA stop codons. It may interact directly with the ribosome. The stimulation of RF-1 and RF-2 is significantly reduced by GTP and GDP, but not by GMP. The sequence is that of Peptide chain release factor 3 (prfC) from Pasteurella multocida (strain Pm70).